We begin with the raw amino-acid sequence, 188 residues long: Elongation factor P (188 aa).

Belongs to the elongation factor P family.

It localises to the cytoplasm. The protein operates within protein biosynthesis; polypeptide chain elongation. Its function is as follows. Involved in peptide bond synthesis. Stimulates efficient translation and peptide-bond synthesis on native or reconstituted 70S ribosomes in vitro. Probably functions indirectly by altering the affinity of the ribosome for aminoacyl-tRNA, thus increasing their reactivity as acceptors for peptidyl transferase. The chain is Elongation factor P from Stutzerimonas stutzeri (strain A1501) (Pseudomonas stutzeri).